We begin with the raw amino-acid sequence, 271 residues long: Interleukin-1 alpha (271 aa).

A propeptide spanning residues 1 to 112 (MAKVPDMFED…DSEEEIIKPR (112 aa)) is cleaved from the precursor. An N6-acetyllysine modification is found at Lys-82. Residues 82 to 86 (KKRRL) form a nuclear localization signal (NLS) region. Ser-87 is subject to Phosphoserine. N-linked (GlcNAc...) asparagine glycans are attached at residues Asn-102, Asn-121, Asn-137, and Asn-141.

Belongs to the IL-1 family. In terms of assembly, monomer. Interacts with TMED10; the interaction mediates the translocation from the cytoplasm into the ERGIC (endoplasmic reticulum-Golgi intermediate compartment) and thereby secretion. Interacts with IL1R1. Interacts with S100A13; this interaction is the first step in the export of IL1A, followed by direct translocation of this complex across the plasma membrane. Acetylated within its nuclear localization sequence, which impacts subcellular localization. In terms of processing, proteolytic processed by CAPN1 in a calcium-dependent manner. Cleavage from 31 kDa precursor to 18 kDa biologically active molecules. Post-translationally, phosphorylated. Phosphorylation greatly enhances susceptibility to digestion and promotes the conversion of pre-IL1A alpha to the biologically active IL1A.

The protein localises to the nucleus. It is found in the cytoplasm. It localises to the secreted. Functionally, cytokine constitutively present intracellularly in nearly all resting non-hematopoietic cells that plays an important role in inflammation and bridges the innate and adaptive immune systems. After binding to its receptor IL1R1 together with its accessory protein IL1RAP, forms the high affinity interleukin-1 receptor complex. Signaling involves the recruitment of adapter molecules such as MYD88, IRAK1 or IRAK4. In turn, mediates the activation of NF-kappa-B and the three MAPK pathways p38, p42/p44 and JNK pathways. Within the cell, acts as an alarmin and cell death results in its liberation in the extracellular space after disruption of the cell membrane to induce inflammation and alert the host to injury or damage. In addition to its role as a danger signal, which occurs when the cytokine is passively released by cell necrosis, directly senses DNA damage and acts as signal for genotoxic stress without loss of cell integrity. The sequence is that of Interleukin-1 alpha (IL1A) from Macaca fascicularis (Crab-eating macaque).